The primary structure comprises 1504 residues: Nischarin (1504 aa).

An N-acetylalanine modification is found at Ala2. The interval 2 to 133 is necessary for binding to phosphoinositide-3-P; not sufficient for targeting to endosomes; that stretch reads ATARTFGPER…GITAALAEEL (132 aa). The PX domain maps to 11–121; sequence REAEPAKEAR…AHFLHFHFYE (111 aa). The interval 120-695 is necessary for homooligomerization and targeting to endosomes; the sequence is YEINGITAAL…ERLALEWALG (576 aa). The interval 245-869 is interaction with PAK1; that stretch reads LSVRFSATSM…LVYSDKRMVQ (625 aa). 6 LRR repeats span residues 288 to 309, 311 to 332, 333 to 354, 356 to 377, 378 to 399, and 403 to 424; these read ALTTLDLSHNSVSEIDESVKLI, KIEFLDLSHNGLLVVDNLQHLY, NLVHLDLSYNKLSSLEGLHTKL, NIKTLNLAGNLLESLSGLHKLY, SLVNLDLRDNRIEQMEEVRSIG, and CLEHVSLLNNPLSIIPDYRTKV. Residues 463–478 show a composition bias toward basic and acidic residues; it reads KSKLSNPEKKGGEDSR. 4 disordered regions span residues 463-501, 524-547, 554-573, and 628-687; these read KSKLSNPEKKGGEDSRLSAAPCIRPSSSPPTVAPASASL, SSTDSLTPEHQPIAQGCSDSLESI, SDDLRDVPGAVGGASPEHAE, and REEG…EEER. A phosphoserine mark is found at Ser541, Ser543, and Ser546. Positions 634–695 form a coiled coil; sequence EQGEEEDEEE…ERLALEWALG (62 aa). Acidic residues-rich tracts occupy residues 635–649 and 661–685; these read QGEEEDEEEEEEEDV and DVEEEEGGGQGEEEEEEEEDEEAEE. Residues 660-869 are interaction with LIMK; sequence PDVEEEEGGG…LVYSDKRMVQ (210 aa). Residues 709-807 form an interaction with ITGA5 region; it reads KVLWCFLIHV…ANLHEFHADL (99 aa). Positions 1016–1104 are disordered; that stretch reads TPGTGGSPQG…PAPPPAEAPA (89 aa). Ser1022 is subject to Phosphoserine. A compositionally biased stretch (basic and acidic residues) spans 1032-1043; that stretch reads PAERRASNDQRP. Positions 1063 to 1078 are enriched in low complexity; sequence PAAASASGPAKTPAPA. Thr1282 carries the post-translational modification Phosphothreonine. Ser1284 bears the Phosphoserine mark.

In terms of assembly, homooligomer. Interacts with GRB2. Interacts with PIK3R1; probably associates with the PI3-kinase complex. Interacts with IRS4. Found in a complex with ITGA5 and PAK1. Found in a complex with LIMK1 and PAK1. Interacts with ITGA5 (via cytoplasmic domain); this interaction is direct. Interacts with PAK1 (via kinase domain); this interaction is direct and is increased upon activation of PAK1. Interacts with LIMK1 (via PDZ and kinase domain); this interaction is direct. Interacts with LIMK2; this interaction depends on LIMK2 activity. Interacts with RAC1 (activated state). Interacts with STK11; this interaction may increase STK11 activity. As to expression, isoform 1, isoform 3 and isoform 4 are expressed in brain. Isoform 1 is expressed in endocrine tissues.

The protein resides in the cell membrane. Its subcellular location is the cytoplasm. It localises to the early endosome. It is found in the recycling endosome. Functionally, acts either as the functional imidazoline-1 receptor (I1R) candidate or as a membrane-associated mediator of the I1R signaling. Binds numerous imidazoline ligands that induces initiation of cell-signaling cascades triggering to cell survival, growth and migration. Its activation by the agonist rilmenidine induces an increase in phosphorylation of mitogen-activated protein kinases MAPK1 and MAPK3 in rostral ventrolateral medulla (RVLM) neurons that exhibited rilmenidine-evoked hypotension. Blocking its activation with efaroxan abolished rilmenidine-induced mitogen-activated protein kinase phosphorylation in RVLM neurons. Acts as a modulator of Rac-regulated signal transduction pathways. Suppresses Rac1-stimulated cell migration by interacting with PAK1 and inhibiting its kinase activity. Also blocks Pak-independent Rac signaling by interacting with RAC1 and inhibiting Rac1-stimulated NF-kB response element and cyclin D1 promoter activation. Also inhibits LIMK1 kinase activity by reducing LIMK1 'Tyr-508' phosphorylation. Inhibits Rac-induced cell migration and invasion in breast and colon epithelial cells. Inhibits lamellipodia formation, when overexpressed. Plays a role in protection against apoptosis. Involved in association with IRS4 in the enhancement of insulin activation of MAPK1 and MAPK3. When overexpressed, induces a redistribution of cell surface ITGA5 integrin to intracellular endosomal structures. This is Nischarin (NISCH) from Homo sapiens (Human).